The chain runs to 752 residues: Catalase-peroxidase (752 aa).

Positions 1–20 are disordered; that stretch reads MENELVSKVKAPVPGNQTNT. Residues 111-234 constitute a cross-link (tryptophyl-tyrosyl-methioninium (Trp-Tyr) (with M-260)); the sequence is WHSAGTYRIG…LGAVQMGLIY (124 aa). Catalysis depends on His112, which acts as the Proton acceptor. A cross-link (tryptophyl-tyrosyl-methioninium (Tyr-Met) (with W-111)) is located at residues 234-260; that stretch reads YVNPEGPNGKPDPAAAAVDIRETFARM. Residue His275 coordinates heme b.

This sequence belongs to the peroxidase family. Peroxidase/catalase subfamily. Homodimer or homotetramer. The cofactor is heme b. Formation of the three residue Trp-Tyr-Met cross-link is important for the catalase, but not the peroxidase activity of the enzyme.

The enzyme catalyses H2O2 + AH2 = A + 2 H2O. It catalyses the reaction 2 H2O2 = O2 + 2 H2O. Functionally, bifunctional enzyme with both catalase and broad-spectrum peroxidase activity. This is Catalase-peroxidase from Koribacter versatilis (strain Ellin345).